The following is a 427-amino-acid chain: Peptidase B (427 aa).

The Mn(2+) site is built by K195 and D200. K207 is an active-site residue. Mn(2+)-binding residues include D218, D277, and E279. R281 is an active-site residue.

This sequence belongs to the peptidase M17 family. In terms of assembly, homohexamer. Mn(2+) is required as a cofactor.

It is found in the cytoplasm. The catalysed reaction is Release of an N-terminal amino acid, Xaa, from a peptide or arylamide. Xaa is preferably Glu or Asp but may be other amino acids, including Leu, Met, His, Cys and Gln.. Probably plays an important role in intracellular peptide degradation. This chain is Peptidase B, found in Shigella boydii serotype 18 (strain CDC 3083-94 / BS512).